The primary structure comprises 234 residues: Phosphoribosylaminoimidazole-succinocarboxamide synthase (234 aa).

This sequence belongs to the SAICAR synthetase family.

The catalysed reaction is 5-amino-1-(5-phospho-D-ribosyl)imidazole-4-carboxylate + L-aspartate + ATP = (2S)-2-[5-amino-1-(5-phospho-beta-D-ribosyl)imidazole-4-carboxamido]succinate + ADP + phosphate + 2 H(+). It participates in purine metabolism; IMP biosynthesis via de novo pathway; 5-amino-1-(5-phospho-D-ribosyl)imidazole-4-carboxamide from 5-amino-1-(5-phospho-D-ribosyl)imidazole-4-carboxylate: step 1/2. The chain is Phosphoribosylaminoimidazole-succinocarboxamide synthase from Streptococcus pyogenes serotype M18 (strain MGAS8232).